A 165-amino-acid chain; its full sequence is Lithostathine-1 (165 aa).

The signal sequence occupies residues 1–21; that stretch reads MARNAYFILLSCLIVLSPSQG. Residue Gln22 is modified to Pyrrolidone carboxylic acid. A C-type lectin domain is found at 33 to 163; the sequence is ISCPEGSNAY…DAQYSFVCKF (131 aa). Intrachain disulfides connect Cys35–Cys46, Cys63–Cys161, and Cys136–Cys153. The N-linked (GlcNAc...) asparagine glycan is linked to Asn129.

As to expression, expressed only in regenerating islets and normal exocrine pancreas, but not in normal pancreatic islets. Expressed strongly in pancreas, moderately in gall bladder, and weakly in liver.

The protein localises to the secreted. In terms of biological role, might act as an inhibitor of spontaneous calcium carbonate precipitation. This is Lithostathine-1 (Reg1) from Mus musculus (Mouse).